A 430-amino-acid polypeptide reads, in one-letter code: MKTPIHPTRLVLEENGDFHKSPKGMLFMDPLNGQFTDLSGVRILRCGVDTVRQLYNGKLRPEVMALFDLSVDVVEFAGYEWSKGRIGRDSGYQYRLQNAEMGLILLIKNHNIKVDTIGSHLKIEVSPHAIDGADPRILQGVLDDLAAAVLSHCETNQAAVHIALDVQGWTPPADLVDRMHCRSRRVRQISGIERIEFDGNASVYGRGETYMFGSANGLQLSIYNKTLQARATDKLDYWESVWATLNGDPFGDGDPAYNPLETVWRIEFRYHHSIVQQFSEGSRMASGEVIGCRTYEGLCPHLQGLWNYACEAFRVLSREGMYDAFWSLISLDARVQVECDPLIERTEYRRYYKTAKGFSGRNCEMFLGQFVSLIARERVPAKKAIESARKLEFWHVIEDHYLAKGWTRRDLERHIHKLMCDRYLRKGYAI.

The chain crosses the membrane as a helical span at residues Gly-207 to Tyr-223.

The protein resides in the host membrane. Its function is as follows. May play a role in phage assembly. This is an uncharacterized protein from Pseudomonas phage Pf1 (Bacteriophage Pf1).